The following is an 838-amino-acid chain: MDMSRRTLLKAQAAAAAAAVAGIDLPAEAQNLAAGEDIALKWSKAPCRFCGTGCGVMVGVKDGRVVATHGDMQAEVNRGLNCVKGYFLSKIMYGADRLTQPLMRVRGGKFDKNAELQPVSWDQAFDEMARQWKRVLREKGPKAVGMFGSGQWTIFEGYAATKLMRAGFRSNNLDPNARHCMASAAVGFIRTFGMDEPMGCYDDFEHADAFVLWGSNMAEMHPILWTRVIDRRLSAPHVRIATLSTYEHRTTELSDQSLIFQPGTDLAILNFVANYIIQNGAVNRDFVERHVNFRVANTDIGYGLRPEHVLEQRATHANEAAVSQPSNFDAYARMVGEYTLEKTEELTGVSKERLLTLAKTYADPKIRVMSLWTMGFNQHVRGVWANHLVYNIHLLTGKISEPGNSPFSLTGQPSACGTAREVGTFSHRLPADMQVNNPEHRKHAEEIWKLPPGLLNGEIGYHAVQQDRMLKDGKLNAYWIMCNNNLQTAPNTNTETYPGYRNPANFVVCSDPYPTVTAMAADVVLPTAMWVEKEGAYGNAERRTHMWRQLVNAPGDARSDLWQLMEFSKRFTTDEVWAQEILVAHPDYKGKSLFDVLWRNGSVDRFGLDEIAADHENFESKQFGFYVQKGLFEEYASFGRGHGHDLAPFDRYHEVRGLRWPVVDGKETRWRYREGHDPYVEKGAGWQFYGNPDRRAVVMAAPYEPPAEAPDQEYDLWLVTGRVLEHWHSGSMTMRVPELYRAFTGAVMFMHPDDAQKRGLRRGQEVRIISRRGEIRSRVETRGRNKMPPGRVFVPFFDASQLINKATLDATDPISKQTDFKKCAVKVIGVATAERGAE.

The tat-type signal signal peptide spans 1-29 (MDMSRRTLLKAQAAAAAAAVAGIDLPAEA). The 57-residue stretch at 40–96 (LKWSKAPCRFCGTGCGVMVGVKDGRVVATHGDMQAEVNRGLNCVKGYFLSKIMYGAD) folds into the 4Fe-4S Mo/W bis-MGD-type domain. Positions 47, 50, 54, and 82 each coordinate [4Fe-4S] cluster. Residues Lys84, Gln151, Asn176, Cys180, 213–220 (WGSNMAEM), 244–248 (STYEH), 263–265 (GTD), Met374, Gln378, Asn484, 510–511 (SD), Lys533, Asp560, and 720–729 (TGRVLEHWHS) each bind Mo-bis(molybdopterin guanine dinucleotide). Phe796 is a substrate binding site. Positions 804 and 821 each coordinate Mo-bis(molybdopterin guanine dinucleotide).

It belongs to the prokaryotic molybdopterin-containing oxidoreductase family. NasA/NapA/NarB subfamily. Component of the periplasmic nitrate reductase NapAB complex composed of NapA and NapB. Requires [4Fe-4S] cluster as cofactor. Mo-bis(molybdopterin guanine dinucleotide) serves as cofactor. In terms of processing, predicted to be exported by the Tat system. The position of the signal peptide cleavage has not been experimentally proven.

It is found in the periplasm. The catalysed reaction is 2 Fe(II)-[cytochrome] + nitrate + 2 H(+) = 2 Fe(III)-[cytochrome] + nitrite + H2O. Catalytic subunit of the periplasmic nitrate reductase complex NapAB. Receives electrons from NapB and catalyzes the reduction of nitrate to nitrite. The sequence is that of Periplasmic nitrate reductase from Methylobacterium sp. (strain 4-46).